Consider the following 687-residue polypeptide: Putative pentatricopeptide repeat-containing protein At3g15930 (687 aa).

PPR repeat units lie at residues aspartate 98–proline 132, aspartate 133–serine 168, asparagine 169–glutamate 199, aspartate 200–proline 234, threonine 235–proline 269, serine 270–serine 304, tryptophan 305–arginine 331, aspartate 332–proline 366, aspartate 367–asparagine 401, aspartate 402–arginine 432, aspartate 433–proline 467, aspartate 468–aspartate 498, and serine 504–asparagine 534. The type E motif stretch occupies residues valine 539–asparagine 614. The tract at residues glycine 615 to threonine 645 is type E(+) motif.

This sequence belongs to the PPR family. PCMP-E subfamily.

The sequence is that of Putative pentatricopeptide repeat-containing protein At3g15930 (PCMP-E51) from Arabidopsis thaliana (Mouse-ear cress).